A 615-amino-acid polypeptide reads, in one-letter code: Threonine--tRNA ligase (615 aa).

Residues M1 to T132 form an editing domain region. The segment at P196–P495 is catalytic. Residues C288, H340, and H464 each coordinate Zn(2+).

This sequence belongs to the class-II aminoacyl-tRNA synthetase family. In terms of assembly, homodimer. The cofactor is Zn(2+).

Its subcellular location is the cytoplasm. The catalysed reaction is tRNA(Thr) + L-threonine + ATP = L-threonyl-tRNA(Thr) + AMP + diphosphate + H(+). In terms of biological role, catalyzes the attachment of threonine to tRNA(Thr) in a two-step reaction: L-threonine is first activated by ATP to form Thr-AMP and then transferred to the acceptor end of tRNA(Thr). Also edits incorrectly charged L-seryl-tRNA(Thr). This Cenarchaeum symbiosum (strain A) protein is Threonine--tRNA ligase (thrS).